A 75-amino-acid polypeptide reads, in one-letter code: Small ribosomal subunit protein bS16 (75 aa).

It belongs to the bacterial ribosomal protein bS16 family.

The polypeptide is Small ribosomal subunit protein bS16 (Nitratiruptor sp. (strain SB155-2)).